We begin with the raw amino-acid sequence, 107 residues long: Iron-sulfur cluster assembly protein CyaY (107 aa).

Belongs to the frataxin family.

Its function is as follows. Involved in iron-sulfur (Fe-S) cluster assembly. May act as a regulator of Fe-S biogenesis. In Neisseria meningitidis serogroup B (strain ATCC BAA-335 / MC58), this protein is Iron-sulfur cluster assembly protein CyaY.